The chain runs to 204 residues: Protein GrpE (204 aa).

Residues methionine 1–alanine 12 show a composition bias toward basic and acidic residues. The tract at residues methionine 1–glutamate 32 is disordered. Over residues glutamate 17–glutamine 26 the composition is skewed to low complexity.

Belongs to the GrpE family. As to quaternary structure, homodimer.

It localises to the cytoplasm. Functionally, participates actively in the response to hyperosmotic and heat shock by preventing the aggregation of stress-denatured proteins, in association with DnaK and GrpE. It is the nucleotide exchange factor for DnaK and may function as a thermosensor. Unfolded proteins bind initially to DnaJ; upon interaction with the DnaJ-bound protein, DnaK hydrolyzes its bound ATP, resulting in the formation of a stable complex. GrpE releases ADP from DnaK; ATP binding to DnaK triggers the release of the substrate protein, thus completing the reaction cycle. Several rounds of ATP-dependent interactions between DnaJ, DnaK and GrpE are required for fully efficient folding. This is Protein GrpE from Pseudoalteromonas atlantica (strain T6c / ATCC BAA-1087).